The chain runs to 272 residues: Small ribosomal subunit protein uS2 (272 aa).

Residues 244-272 (EDDYEGAEGDLDLDSANEEESLEDNNEEE) form a disordered region.

The protein belongs to the universal ribosomal protein uS2 family.

In Trichodesmium erythraeum (strain IMS101), this protein is Small ribosomal subunit protein uS2.